We begin with the raw amino-acid sequence, 61 residues long: Insect toxin LqhIT5 (61 aa).

The region spanning 1-61 (DGYIRGGDGC…EWKYETNTCG (61 aa)) is the LCN-type CS-alpha/beta domain. Disulfide bonds link cysteine 10–cysteine 60, cysteine 14–cysteine 35, cysteine 21–cysteine 42, and cysteine 25–cysteine 44.

This sequence belongs to the long (4 C-C) scorpion toxin superfamily. Sodium channel inhibitor family. Beta subfamily. As to expression, expressed by the venom gland.

It localises to the secreted. In terms of biological role, excitatory insect beta-toxins induce a spastic paralysis. They bind voltage-independently at site-4 of sodium channels (Nav) and shift the voltage of activation toward more negative potentials thereby affecting sodium channel activation and promoting spontaneous and repetitive firing. This toxin is active only on insects. It operates by inducing a fast contraction paralysis without depressant activity. It is more similar to the excitatory toxins in its mode of action and the depressant toxins in its primary structure. The chain is Insect toxin LqhIT5 from Leiurus hebraeus (Hebrew deathstalker scorpion).